The following is an 876-amino-acid chain: Leucine--tRNA ligase (876 aa).

The 'HIGH' region motif lies at 42–52 (PYPSGKLHMGH). Positions 634–638 (KMSKS) match the 'KMSKS' region motif. Residue Lys-637 coordinates ATP.

It belongs to the class-I aminoacyl-tRNA synthetase family.

The protein localises to the cytoplasm. It carries out the reaction tRNA(Leu) + L-leucine + ATP = L-leucyl-tRNA(Leu) + AMP + diphosphate. This Neisseria meningitidis serogroup B (strain ATCC BAA-335 / MC58) protein is Leucine--tRNA ligase.